We begin with the raw amino-acid sequence, 199 residues long: UPF0637 protein LVIS_1261 (199 aa).

This sequence belongs to the UPF0637 family.

This Levilactobacillus brevis (strain ATCC 367 / BCRC 12310 / CIP 105137 / JCM 1170 / LMG 11437 / NCIMB 947 / NCTC 947) (Lactobacillus brevis) protein is UPF0637 protein LVIS_1261.